A 501-amino-acid polypeptide reads, in one-letter code: Glutamate--tRNA ligase (501 aa).

The 'HIGH' region motif lies at Pro-21–Leu-31. The 'KMSKS' region motif lies at Lys-266–Arg-270. Lys-269 serves as a coordination point for ATP.

Belongs to the class-I aminoacyl-tRNA synthetase family. Glutamate--tRNA ligase type 1 subfamily. In terms of assembly, monomer.

The protein resides in the cytoplasm. It carries out the reaction tRNA(Glu) + L-glutamate + ATP = L-glutamyl-tRNA(Glu) + AMP + diphosphate. In terms of biological role, catalyzes the attachment of glutamate to tRNA(Glu) in a two-step reaction: glutamate is first activated by ATP to form Glu-AMP and then transferred to the acceptor end of tRNA(Glu). The polypeptide is Glutamate--tRNA ligase (Kineococcus radiotolerans (strain ATCC BAA-149 / DSM 14245 / SRS30216)).